The chain runs to 352 residues: Large ribosomal subunit protein uL5m (352 aa).

The tract at residues 28–109 (STQTGAGAAA…HPIQSPPSSD (82 aa)) is disordered. Residues 63–80 (EEDKKEFRPWKRAADRKA) show a composition bias toward basic and acidic residues.

The protein belongs to the universal ribosomal protein uL5 family. In terms of assembly, component of the mitochondrial large ribosomal subunit (mt-LSU). Mature N.crassa 74S mitochondrial ribosomes consist of a small (37S) and a large (54S) subunit. The 37S small subunit contains a 16S ribosomal RNA (16S mt-rRNA) and 32 different proteins. The 54S large subunit contains a 23S rRNA (23S mt-rRNA) and 42 different proteins. Unlike bacterial L5, uL5m does not bind zinc.

It localises to the mitochondrion. In terms of biological role, component of the mitochondrial ribosome (mitoribosome), a dedicated translation machinery responsible for the synthesis of mitochondrial genome-encoded proteins, including at least some of the essential transmembrane subunits of the mitochondrial respiratory chain. The mitoribosomes are attached to the mitochondrial inner membrane and translation products are cotranslationally integrated into the membrane. In Neurospora crassa (strain ATCC 24698 / 74-OR23-1A / CBS 708.71 / DSM 1257 / FGSC 987), this protein is Large ribosomal subunit protein uL5m (mrpl7).